Consider the following 253-residue polypeptide: Imidazole glycerol phosphate synthase subunit HisF (253 aa).

Residues Asp-11 and Asp-130 contribute to the active site.

Belongs to the HisA/HisF family. As to quaternary structure, heterodimer of HisH and HisF.

It is found in the cytoplasm. The enzyme catalyses 5-[(5-phospho-1-deoxy-D-ribulos-1-ylimino)methylamino]-1-(5-phospho-beta-D-ribosyl)imidazole-4-carboxamide + L-glutamine = D-erythro-1-(imidazol-4-yl)glycerol 3-phosphate + 5-amino-1-(5-phospho-beta-D-ribosyl)imidazole-4-carboxamide + L-glutamate + H(+). It functions in the pathway amino-acid biosynthesis; L-histidine biosynthesis; L-histidine from 5-phospho-alpha-D-ribose 1-diphosphate: step 5/9. In terms of biological role, IGPS catalyzes the conversion of PRFAR and glutamine to IGP, AICAR and glutamate. The HisF subunit catalyzes the cyclization activity that produces IGP and AICAR from PRFAR using the ammonia provided by the HisH subunit. The polypeptide is Imidazole glycerol phosphate synthase subunit HisF (Cereibacter sphaeroides (strain ATCC 17029 / ATH 2.4.9) (Rhodobacter sphaeroides)).